The chain runs to 577 residues: E3 ubiquitin protein ligase RIN3 (577 aa).

A run of 6 helical transmembrane segments spans residues 3–23 (ITYL…LQVW), 58–78 (TTIA…VLSL), 120–140 (GVLW…QALA), 162–182 (YSAL…SLMI), 191–211 (YLLL…ALLI), and 272–292 (YLHI…VLFL). An RING-type; atypical zinc finger spans residues 337 to 379 (CAICREPMAKAKRLHCNHLFHLGCLRSWLDQGLNEVYSCPTCR). Residues 537-577 (SILAMAETVREVLPHVPDEIIFQDLQRTNSVSVTVNNLLQM) enclose the CUE domain.

As to quaternary structure, interacts (via C-terminus) with RPM1 (via N-terminus).

It is found in the membrane. It catalyses the reaction S-ubiquitinyl-[E2 ubiquitin-conjugating enzyme]-L-cysteine + [acceptor protein]-L-lysine = [E2 ubiquitin-conjugating enzyme]-L-cysteine + N(6)-ubiquitinyl-[acceptor protein]-L-lysine.. Its pathway is protein modification; protein ubiquitination. E3 ubiquitin protein ligase that acts as a positive regulator of RPM1- and RPS2-dependent hypersensitive response (HR), in association with RIN2. Probably not required for RPM1 degradation during HR. The sequence is that of E3 ubiquitin protein ligase RIN3 (RIN3) from Arabidopsis thaliana (Mouse-ear cress).